A 347-amino-acid polypeptide reads, in one-letter code: S-adenosylmethionine:tRNA ribosyltransferase-isomerase (347 aa).

The protein belongs to the QueA family. In terms of assembly, monomer.

The protein localises to the cytoplasm. It carries out the reaction 7-aminomethyl-7-carbaguanosine(34) in tRNA + S-adenosyl-L-methionine = epoxyqueuosine(34) in tRNA + adenine + L-methionine + 2 H(+). It functions in the pathway tRNA modification; tRNA-queuosine biosynthesis. Transfers and isomerizes the ribose moiety from AdoMet to the 7-aminomethyl group of 7-deazaguanine (preQ1-tRNA) to give epoxyqueuosine (oQ-tRNA). The protein is S-adenosylmethionine:tRNA ribosyltransferase-isomerase of Streptococcus thermophilus (strain CNRZ 1066).